The sequence spans 377 residues: Flagellin D (377 aa).

2 coiled-coil regions span residues 103–129 and 310–339; these read SNSK…IAET and AFQN…IKDT.

This sequence belongs to the bacterial flagellin family. Heteromer of multiple flagellin subunits including FlaA, FlaB, FlaC, FlaD and FlaE.

The protein localises to the secreted. It localises to the bacterial flagellum. Functionally, flagellin is the subunit protein which polymerizes to form the filaments of bacterial flagella. FlaD is not essential for flagellar synthesis and motility. This Vibrio cholerae serotype O1 (strain ATCC 39315 / El Tor Inaba N16961) protein is Flagellin D (flaD).